The chain runs to 327 residues: Phenylalanine--tRNA ligase alpha subunit (327 aa).

Glu252 is a Mg(2+) binding site.

This sequence belongs to the class-II aminoacyl-tRNA synthetase family. Phe-tRNA synthetase alpha subunit type 1 subfamily. As to quaternary structure, tetramer of two alpha and two beta subunits. Mg(2+) is required as a cofactor.

The protein localises to the cytoplasm. The catalysed reaction is tRNA(Phe) + L-phenylalanine + ATP = L-phenylalanyl-tRNA(Phe) + AMP + diphosphate + H(+). This Pectobacterium carotovorum subsp. carotovorum (strain PC1) protein is Phenylalanine--tRNA ligase alpha subunit.